Reading from the N-terminus, the 557-residue chain is Potassium-transporting ATPase potassium-binding subunit (557 aa).

A run of 12 helical transmembrane segments spans residues 5–25, 63–83, 132–152, 170–190, 253–273, 283–303, 329–349, 356–376, 379–399, 416–436, 484–504, and 526–546; these read GFLL…PLGS, LCAI…MLLG, GLTV…FALI, LLRI…LFFI, FVQM…FGEV, LLWA…WAEV, VLVS…AVIA, ALGG…FGGV, GLYG…LMIG, LTAL…ALAM, LLAF…MAIA, and LFVG…FIPA.

The protein belongs to the KdpA family. In terms of assembly, the system is composed of three essential subunits: KdpA, KdpB and KdpC.

The protein localises to the cell inner membrane. Part of the high-affinity ATP-driven potassium transport (or Kdp) system, which catalyzes the hydrolysis of ATP coupled with the electrogenic transport of potassium into the cytoplasm. This subunit binds the periplasmic potassium ions and delivers the ions to the membrane domain of KdpB through an intramembrane tunnel. The protein is Potassium-transporting ATPase potassium-binding subunit of Escherichia coli (strain SE11).